Reading from the N-terminus, the 249-residue chain is Methyl-coenzyme M reductase I subunit gamma (249 aa).

Arg120 lines the coenzyme M pocket.

Belongs to the methyl-coenzyme M reductase gamma subunit family. In terms of assembly, MCR is a hexamer of two alpha, two beta, and two gamma chains, forming a dimer of heterotrimers. Requires coenzyme F430 as cofactor.

The protein resides in the cytoplasm. It carries out the reaction coenzyme B + methyl-coenzyme M = methane + coenzyme M-coenzyme B heterodisulfide. The protein operates within one-carbon metabolism; methyl-coenzyme M reduction; methane from methyl-coenzyme M: step 1/1. Methyl-coenzyme M reductase activity is inhibited by 3-nitrooxypropanol (3-NOP) in vitro and in vivo, by oxidation of its active site Ni(I), which stops both growth and methanogenesis. Is also inhibited by the reaction product CoM-S-S-CoB. Component of the methyl-coenzyme M reductase (MCR) I that catalyzes the reductive cleavage of methyl-coenzyme M (CoM-S-CH3 or 2-(methylthio)ethanesulfonate) using coenzyme B (CoB or 7-mercaptoheptanoylthreonine phosphate) as reductant which results in the production of methane and the mixed heterodisulfide of CoB and CoM (CoM-S-S-CoB). This is the final step in methanogenesis. Neither N-6-mercaptohexanoylthreonine phosphate (H-S-HxoTP) nor N-8-mercaptooctanoylthreonine phosphate (H-SOcoTP) nor any other thiol compound such as CoA or CoM can substitute for CoB as the electron donor. In Methanothermobacter marburgensis (strain ATCC BAA-927 / DSM 2133 / JCM 14651 / NBRC 100331 / OCM 82 / Marburg) (Methanobacterium thermoautotrophicum), this protein is Methyl-coenzyme M reductase I subunit gamma (mcrG).